A 516-amino-acid polypeptide reads, in one-letter code: MEELQGYLKKNGSPQQHFLYPLLLQEYIYTLAHDHGLNSSIFYESIEFIGYDNKSSLVLVKRLITRMYQQNLFIYSVNDSNQNRFGGHTNFFYSHFFYSQMVSESFSVIVEIPFSLRLVSSLEEEEKEIPKSQNLRSIHSIFPFLEDKLFHLNNVSDILIPHPIHLEILVQTLQYWIQDVPSLHLLRFFLHKYHNLNSFIQNNKTIYVFSKENKRLFWFLYNSYVSECEFLFVFIRKKSCYLRSTSSGAFLERSHFYGKKEHIIVVCCNNFQKTLCPVKDLFMHYVRYQGKAILASRGTHLLMKKWRYYLVNFWQYYFHFWSQPYRMQINPLLNYSFYFMGYLSSVLINPYAVKNQMLENSFLIDTDINKFDTIIPGIPLIGSLSKVKFCTVSGHPISKPGWADLSDFDIIDRFGRICRNLSHYHSGSSKKQTLYRIKYILRLSCARTLARKHKSTARALLQRLGSGLVEEFFTEEEQFISFIFPKTTPFPLHGSHRERIWSLDIIRVNDLVNQII.

The protein belongs to the intron maturase 2 family. MatK subfamily.

Its subcellular location is the plastid. It localises to the chloroplast. In terms of biological role, usually encoded in the trnK tRNA gene intron. Probably assists in splicing its own and other chloroplast group II introns. In Medeola virginiana (Indian cucumber root), this protein is Maturase K.